The following is a 969-amino-acid chain: Poly(ADP-ribose) glycohydrolase (969 aa).

Disordered stretches follow at residues 1 to 149 (MSAG…QQQT), 161 to 341 (HAEQ…CQAR), and 368 to 400 (NNAGTSDLNAKPSGNSSSLNVECRSSKQHGKRD). Residues 1–449 (MSAGPGWEPC…LPPEKKWLGT (449 aa)) form an A-domain region. Positions 10 to 16 (CTKRPRW) match the Nuclear localization signal motif. A compositionally biased stretch (polar residues) spans 69 to 84 (NATSFVFKQKTITTWM). The PIP-box (PCNA interacting peptide) motif lies at 77–84 (QKTITTWM). Positions 87–100 (KGPKTAESESKENN) are enriched in basic and acidic residues. Over residues 101-113 (NTRIDSMMSSVQK) the composition is skewed to polar residues. Residues 116–125 (FYPHKVEKLE) show a composition bias toward basic and acidic residues. Composition is skewed to polar residues over residues 128-149 (PQLNLDKSPTEKSSQYLNQQQT) and 179-189 (QLSNANIGQSP). Serine 135 is subject to Phosphoserine. Threonine 137 carries the phosphothreonine modification. Residues 190–205 (HTDDHSDTDHEEDRDN) are compositionally biased toward basic and acidic residues. Serine 195 is modified (phosphoserine). Threonine 197 is modified (phosphothreonine). The segment covering 226–237 (ARSNCKCSGSRQ) has biased composition (polar residues). Phosphoserine is present on residues serine 256, serine 259, serine 281, serine 286, serine 293, serine 297, and serine 311. Residues 275–284 (KLTGQESSLG) show a composition bias toward polar residues. Positions 311-325 (SEADEETSPVFDEQD) are enriched in acidic residues. Composition is skewed to polar residues over residues 329–339 (SQTANKLSSCQ) and 369–387 (NAGTSDLNAKPSGNSSSLN). Lysine 334 carries the N6-acetyllysine modification. The catalytic stretch occupies residues 603 to 788 (QPIPLLKQKM…TEQYSEYTGY (186 aa)). 719–720 (IE) is a binding site for substrate. Aspartate 730 is an active-site residue. Substrate is bound by residues asparagine 733 and glutamine 747. Residues glutamate 748 and glutamate 749 contribute to the active site. Substrate is bound by residues tyrosine 788 and 862–867 (NWGCGA).

Belongs to the poly(ADP-ribose) glycohydrolase family. In terms of assembly, interacts with PCNA. Interacts with NUDT5.

It localises to the nucleus. The enzyme catalyses [(1''-&gt;2')-ADP-alpha-D-ribose](n) + H2O = [(1''-&gt;2')-ADP-alpha-D-ribose](n-1) + ADP-D-ribose. Its function is as follows. Poly(ADP-ribose) glycohydrolase that degrades poly(ADP-ribose) by hydrolyzing the ribose-ribose bonds present in poly(ADP-ribose). PARG acts both as an endo- and exoglycosidase, releasing poly(ADP-ribose) of different length as well as ADP-ribose monomers. It is however unable to cleave the ester bond between the terminal ADP-ribose and ADP-ribosylated residues, leaving proteins that are mono-ADP-ribosylated. Poly(ADP-ribose) is synthesized after DNA damage is only present transiently and is rapidly degraded by PARG. Required to prevent detrimental accumulation of poly(ADP-ribose) upon prolonged replicative stress, while it is not required for recovery from transient replicative stress. Responsible for the prevalence of mono-ADP-ribosylated proteins in cells, thanks to its ability to degrade poly(ADP-ribose) without cleaving the terminal protein-ribose bond. Required for retinoid acid-dependent gene transactivation, probably by removing poly(ADP-ribose) from histone demethylase KDM4D, allowing chromatin derepression at RAR-dependent gene promoters. Involved in the synthesis of ATP in the nucleus, together with PARP1, NMNAT1 and NUDT5. Nuclear ATP generation is required for extensive chromatin remodeling events that are energy-consuming. This is Poly(ADP-ribose) glycohydrolase from Mus musculus (Mouse).